A 55-amino-acid polypeptide reads, in one-letter code: Small polypeptide DEVIL 10 (55 aa).

N7 carries N-linked (GlcNAc...) asparagine glycosylation. The tract at residues 19–50 (RFGDRCLLMAKQQRTRLYILRRCVSMLLCWHD) is required for DVL/RTFL small polypeptide activity. Residues 32 to 48 (RTRLYILRRCVSMLLCW) traverse the membrane as a helical segment.

Belongs to the DVL/RTFL small polypeptides family.

The protein resides in the cell membrane. In terms of biological role, small polypeptide acting as a regulatory molecule which coordinates cellular responses required for differentiation, growth and development, probably by restricting polar cell proliferation in lateral organs and coordinating socket cell recruitment and differentiation at trichome sites. This Arabidopsis thaliana (Mouse-ear cress) protein is Small polypeptide DEVIL 10.